A 463-amino-acid chain; its full sequence is Type I restriction enzyme StySPI specificity subunit (463 aa).

The protein belongs to the type-I restriction system S methylase family. As to quaternary structure, the type I restriction/modification system is composed of three polypeptides R, M and S; the restriction enzyme has stoichiometry R(2)M(2)S(1) while the methyltransferase is M(2)S(1).

Its function is as follows. The specificity (S) subunit of a type I restriction enzyme; this subunit dictates DNA sequence specificity. The M and S subunits together form a methyltransferase (MTase) that methylates A-2 on the top strand and A-3 on the bottom strand of the sequence 5'-AACN(6)GTRC-3'. In the presence of the R subunit the complex can also act as an endonuclease, binding to the same target sequence but cutting the DNA some distance from this site. Whether the DNA is cut or modified depends on the methylation state of the target sequence. When the target site is unmodified, the DNA is cut. When the target site is hemimethylated, the complex acts as a maintenance MTase modifying the DNA so that both strands become methylated. After locating a non-methylated recognition site, the enzyme complex serves as a molecular motor that translocates DNA in an ATP-dependent manner until a collision occurs that triggers cleavage. This chain is Type I restriction enzyme StySPI specificity subunit, found in Salmonella potsdam.